Reading from the N-terminus, the 491-residue chain is Katanin p60 ATPase-containing subunit A1 (491 aa).

An interaction with KATNB1 region spans residues 1 to 29 (MSLLMISENVKLAREYALLGNYDSAMVYY). Residues 1 to 75 (MSLLMISENV…VKDIMKTLES (75 aa)) are interaction with dynein and NDEL1. Residues 1–185 (MSLLMISENV…EPETNKFDST (185 aa)) form an interaction with microtubules region. A phosphoserine; by DYRK2 mark is found at Ser-42 and Ser-109. The tract at residues 87–185 (QHDLPASEGE…EPETNKFDST (99 aa)) is disordered. Thr-133 carries the post-translational modification Phosphothreonine; by DYRK2. The span at 145–169 (HNDRGKAVRCREKKEQNKGREEKNK) shows a compositional bias: basic and acidic residues. Position 170 is a phosphoserine (Ser-170). 249-256 (GPPGTGKT) contributes to the ATP binding site.

The protein belongs to the AAA ATPase family. Katanin p60 subunit A1 subfamily. In terms of assembly, can homooligomerize into hexameric rings, which may be promoted by interaction with microtubules. Interacts with KATNB1, which may serve as a targeting subunit. Interacts with ASPM; the katanin complex formation KATNA1:KATNB1 is required for the association of ASPM Interacts with dynein and NDEL1. Associates with the E3 ligase complex containing DYRK2, EDD/UBR5, DDB1 and DCAF1 proteins (EDVP complex). Interacts with KLHL42 (via the kelch domains). Interacts with CUL3; the interaction is enhanced by KLHL42. Interacts with KATNB1 and KATNBL1. Interacts with CAMSAP2 and CAMSAP3; leading to regulate the length of CAMSAP-decorated microtubule stretches. Post-translationally, phosphorylation by DYRK2 triggers ubiquitination and subsequent degradation. Ubiquitinated by the BCR(KLHL42) E3 ubiquitin ligase complex, leading to its proteasomal degradation. Ubiquitinated by the EDVP E3 ligase complex and subsequently targeted for proteasomal degradation.

The protein localises to the cytoplasm. It localises to the midbody. It is found in the cytoskeleton. Its subcellular location is the microtubule organizing center. The protein resides in the centrosome. The protein localises to the spindle pole. It localises to the spindle. The catalysed reaction is n ATP + n H2O + a microtubule = n ADP + n phosphate + (n+1) alpha/beta tubulin heterodimers.. ATPase activity is stimulated by microtubules, which promote homooligomerization. ATP-dependent microtubule severing is stimulated by interaction with KATNB1. Functionally, catalytic subunit of a complex which severs microtubules in an ATP-dependent manner. Microtubule severing may promote rapid reorganization of cellular microtubule arrays and the release of microtubules from the centrosome following nucleation. Microtubule release from the mitotic spindle poles may allow depolymerization of the microtubule end proximal to the spindle pole, leading to poleward microtubule flux and poleward motion of chromosome. Microtubule release within the cell body of neurons may be required for their transport into neuronal processes by microtubule-dependent motor proteins. This transport is required for axonal growth. The protein is Katanin p60 ATPase-containing subunit A1 of Macaca fascicularis (Crab-eating macaque).